Reading from the N-terminus, the 866-residue chain is Leucine--tRNA ligase (866 aa).

Positions 42–52 (PYPSGKLHMGH) match the 'HIGH' region motif. Residues 630-634 (KMSKS) carry the 'KMSKS' region motif. K633 provides a ligand contact to ATP.

It belongs to the class-I aminoacyl-tRNA synthetase family.

It is found in the cytoplasm. It catalyses the reaction tRNA(Leu) + L-leucine + ATP = L-leucyl-tRNA(Leu) + AMP + diphosphate. This is Leucine--tRNA ligase from Laribacter hongkongensis (strain HLHK9).